The primary structure comprises 130 residues: Small ribosomal subunit protein uS11c (130 aa).

Belongs to the universal ribosomal protein uS11 family. As to quaternary structure, part of the 30S ribosomal subunit.

It is found in the plastid. The protein resides in the chloroplast. The sequence is that of Small ribosomal subunit protein uS11c from Nephroselmis olivacea (Green alga).